We begin with the raw amino-acid sequence, 174 residues long: Crossover junction endodeoxyribonuclease RuvC (174 aa).

Catalysis depends on residues D8, E67, and D139. 3 residues coordinate Mg(2+): D8, E67, and D139.

The protein belongs to the RuvC family. Homodimer which binds Holliday junction (HJ) DNA. The HJ becomes 2-fold symmetrical on binding to RuvC with unstacked arms; it has a different conformation from HJ DNA in complex with RuvA. In the full resolvosome a probable DNA-RuvA(4)-RuvB(12)-RuvC(2) complex forms which resolves the HJ. It depends on Mg(2+) as a cofactor.

The protein localises to the cytoplasm. The enzyme catalyses Endonucleolytic cleavage at a junction such as a reciprocal single-stranded crossover between two homologous DNA duplexes (Holliday junction).. In terms of biological role, the RuvA-RuvB-RuvC complex processes Holliday junction (HJ) DNA during genetic recombination and DNA repair. Endonuclease that resolves HJ intermediates. Cleaves cruciform DNA by making single-stranded nicks across the HJ at symmetrical positions within the homologous arms, yielding a 5'-phosphate and a 3'-hydroxyl group; requires a central core of homology in the junction. The consensus cleavage sequence is 5'-(A/T)TT(C/G)-3'. Cleavage occurs on the 3'-side of the TT dinucleotide at the point of strand exchange. HJ branch migration catalyzed by RuvA-RuvB allows RuvC to scan DNA until it finds its consensus sequence, where it cleaves and resolves the cruciform DNA. The polypeptide is Crossover junction endodeoxyribonuclease RuvC (Pseudomonas fluorescens (strain ATCC BAA-477 / NRRL B-23932 / Pf-5)).